A 35-amino-acid polypeptide reads, in one-letter code: Bacteriocin lactococcin-G subunit beta (35 aa).

In terms of assembly, bacteriocin activity requires interaction of alpha and beta peptides in a molar ratio of 7:1 or 8:1 respectively.

In terms of biological role, kills Lactococci. The polypeptide is Bacteriocin lactococcin-G subunit beta (Lactococcus lactis subsp. lactis (Streptococcus lactis)).